Reading from the N-terminus, the 540-residue chain is Type II methyltransferase M.AccI (540 aa).

Belongs to the N(4)/N(6)-methyltransferase family. As to quaternary structure, monomer.

The catalysed reaction is a 2'-deoxyadenosine in DNA + S-adenosyl-L-methionine = an N(6)-methyl-2'-deoxyadenosine in DNA + S-adenosyl-L-homocysteine + H(+). A gamma subtype methylase, recognizes the double-stranded sequence 5'-GTMKAC-3', methylates A-5 on both strands, and protects the DNA from cleavage by the AccI endonuclease. This Acinetobacter calcoaceticus protein is Type II methyltransferase M.AccI (accIM).